Reading from the N-terminus, the 517-residue chain is FAD-dependent monooxygenase dmxR9 (517 aa).

FAD contacts are provided by Val96 and Arg162. Catalysis depends on residues Arg243 and Tyr270. The FAD site is built by Asp365 and Ala378.

The protein belongs to the paxM FAD-dependent monooxygenase family. It depends on FAD as a cofactor.

It participates in secondary metabolite biosynthesis. Its function is as follows. FAD-dependent monooxygenase; part of the gene cluster that mediates the biosynthesis of the dimeric xanthones cryptosporioptides. The pathway begins with the synthesis of atrochrysone thioester by the polyketide synthase dmx-nrPKS. The atrochrysone carboxyl ACP thioesterase dmxR1 then breaks the thioester bond and releases the atrochrysone carboxylic acid from dmx-nrPKS. Atrochrysone carboxylic acid is decarboxylated by the decarboxylase dmxR15, and oxidized by the anthrone oxygenase dmxR16 to yield emodin. Emodin is then reduced to emodin hydroquinone by the oxidoreductase dmxR7. A-ring reduction by the short chain dehydrogenase dmxR18, dehydration by the scytalone dehydratase-like protein dmxR17 and probable spontaneous re-oxidation, results in overall deoxygenation to chrysophanol. Baeyer-Villiger oxidation by the Baeyer-Villiger monooxygenase (BVMO) dmxR6 then yields monodictylactone in equilibrium with monodictyphenone. In the case of the cryptosporioptides biosynthesis, monodictylactone is reduced at C-12 to an alcohol (by the short chain dehydrogenases dmxR12 or dmxR8) and hydroxylated at C-5 by dmxR9, yielding the electron-rich aromatic which could eliminate H(2)O to form the ortho-quinonemethide, followed by tautomerisation to paraquinone and complete the formal reduction to produce the 10-methylgroup. Conjugate addition of C-4a-OH to the resulting paraquinone by the monooxygenase dmxR10 then gives cyclohexadienone, which is then reduced at C-5 by the short chain dehydrogenase dmxR3 to give the dihydroxanthone. The 6,7-epoxide in the cryptosporioptides could be introduced by the cytochrome P450 monooxygenase dmxL3. The highly reducing PKS dmxL2 manufactures butyrate, which is further carboxylated by dmxL1 to form ethylmalonate. It is not yet clear whether the carboxylation occurs while the butyrate is attached to the ACP of dmxL2, but this unusual fungal metabolite could then be esterified to O-5 by the O-acetyltransferase dmxR13. Finally, dimerization performed by dmxR5 gives the observed dimers cryptosporioptides A, B and C as the final products of the pathway. This Cryptosporiopsis sp. (strain 8999) protein is FAD-dependent monooxygenase dmxR9.